Consider the following 277-residue polypeptide: Probable endonuclease 4 (277 aa).

Zn(2+)-binding residues include His70, His108, Glu145, Asp178, His181, His212, Asp225, His227, and Glu257.

This sequence belongs to the AP endonuclease 2 family. Requires Zn(2+) as cofactor.

It catalyses the reaction Endonucleolytic cleavage to 5'-phosphooligonucleotide end-products.. In terms of biological role, endonuclease IV plays a role in DNA repair. It cleaves phosphodiester bonds at apurinic or apyrimidinic (AP) sites, generating a 3'-hydroxyl group and a 5'-terminal sugar phosphate. The polypeptide is Probable endonuclease 4 (Mycoplasmopsis pulmonis (strain UAB CTIP) (Mycoplasma pulmonis)).